Consider the following 307-residue polypeptide: Malate dehydrogenase (307 aa).

Residues 8–13 and Asp32 each bind NAD(+); that span reads GAGNVG. The substrate site is built by Arg81 and Arg87. NAD(+) is bound by residues Asn94 and 117–119; that span reads VSN. Positions 119 and 150 each coordinate substrate. His174 serves as the catalytic Proton acceptor.

The protein belongs to the LDH/MDH superfamily. MDH type 3 family.

The enzyme catalyses (S)-malate + NAD(+) = oxaloacetate + NADH + H(+). Catalyzes the reversible oxidation of malate to oxaloacetate. The protein is Malate dehydrogenase of Dehalococcoides mccartyi (strain ATCC BAA-2266 / KCTC 15142 / 195) (Dehalococcoides ethenogenes (strain 195)).